Reading from the N-terminus, the 127-residue chain is MQGSVQIQKGNISSSYTPEKHPSHPTSANGSMSPKRICELRKEDPSSLHKQLLKNSLEKGTEHCDRTTKTYGQIFQLFCLCCAGAAPFYRARAFRLQSTFLIYTLHCSSDSVSTSTHYFRRLYSRRW.

The span at 1-17 shows a compositional bias: polar residues; sequence MQGSVQIQKGNISSSYT. Positions 1–36 are disordered; that stretch reads MQGSVQIQKGNISSSYTPEKHPSHPTSANGSMSPKR.

This is an uncharacterized protein from Treponema pallidum (strain Nichols).